The primary structure comprises 262 residues: MTRIHPTAIVEPGAQIDESVEIGPYAIIGPHVTIGARTTIGSHSVIEGHTTIGEDNRIGHYASVGGRPQDMKYKDEPTKLVIGNRNTIREFTTIHTGTVQDAGVTTLGDDNWIMAYVHIGHDCRVGNHVILSSNAQMAGHVEIGDWAIIGGMSGVHQFVRIGAHAMLGGASALVQDVPPFVIAAGNKAEPHGINVEGLRRRGFSPDAISALRSAYRLLYKNGLSLEEAKTQLRELAQAGGDGDAPVNALVAFIDASQRGIIR.

The protein belongs to the transferase hexapeptide repeat family. LpxA subfamily. As to quaternary structure, homotrimer.

Its subcellular location is the cytoplasm. The catalysed reaction is a (3R)-hydroxyacyl-[ACP] + UDP-N-acetyl-alpha-D-glucosamine = a UDP-3-O-[(3R)-3-hydroxyacyl]-N-acetyl-alpha-D-glucosamine + holo-[ACP]. Its pathway is glycolipid biosynthesis; lipid IV(A) biosynthesis; lipid IV(A) from (3R)-3-hydroxytetradecanoyl-[acyl-carrier-protein] and UDP-N-acetyl-alpha-D-glucosamine: step 1/6. Involved in the biosynthesis of lipid A, a phosphorylated glycolipid that anchors the lipopolysaccharide to the outer membrane of the cell. This is Acyl-[acyl-carrier-protein]--UDP-N-acetylglucosamine O-acyltransferase from Burkholderia multivorans (strain ATCC 17616 / 249).